Consider the following 917-residue polypeptide: Interleukin-6 receptor subunit beta (917 aa).

Positions 1 to 22 are cleaved as a signal peptide; it reads MSAPRIWLAQALLFFLTTESIG. The Extracellular segment spans residues 23-617; it reads QLLEPCGYIY…TPKFAQGEIE (595 aa). The Ig-like C2-type domain occupies 26-120; the sequence is EPCGYIYPEF…IEQNVYGVTM (95 aa). 2 disulfide bridges follow: C28/C54 and C48/C103. N-linked (GlcNAc...) asparagine glycans are attached at residues N43, N61, N83, and N131. 5 Fibronectin type-III domains span residues 128-221, 222-322, 327-417, 422-515, and 517-611; these read KPTN…VKPT, PPYN…TYED, PPSF…IPSP, AYSV…LKQA, and PARG…TPKF. C134 and C144 are disulfide-bonded. N157 is a glycosylation site (N-linked (GlcNAc...) asparagine). A disulfide bridge connects residues C172 and C180. The N-linked (GlcNAc...) asparagine glycan is linked to N225. Residues 308 to 312 carry the WSXWS motif motif; the sequence is WSDWS. The N-linked (GlcNAc...) asparagine glycan is linked to N388. C456 and C464 are disulfide-bonded. N-linked (GlcNAc...) asparagine glycans are attached at residues N476 and N551. A helical membrane pass occupies residues 618–639; it reads AIVVPVCLAFLLTTLLGVLFCF. The Cytoplasmic segment spans residues 640 to 917; it reads NKRDLIKKHI…TVRQGGYMPQ (278 aa). Positions 649 to 657 match the Box 1 motif motif; the sequence is IWPNVPDPS. Disordered stretches follow at residues 658-678 and 719-754; these read KSHI…NSKD and TEGH…TAST. A phosphoserine mark is found at S659 and S665. Residues 729-753 are compositionally biased toward low complexity; it reads SSCMSSSRPSISSNEENESAQSTAS. S780, S787, S827, and S837 each carry phosphoserine. The disordered stretch occupies residues 898–917; that stretch reads EEIPKSYLPQTVRQGGYMPQ.

This sequence belongs to the type I cytokine receptor family. Type 2 subfamily. As to quaternary structure, component of a hexamer of two molecules each of IL6, IL6R and IL6ST; associates with the complex IL6:IL6R but does not interact with IL6. Forms heterodimers composed of LIFR and IL6ST (type I OSM receptor) which are activated by LIF and OSM. Also forms heterodimers composed of OSMR and IL6ST (type II receptor) which are activated by OSM but not by LIF. Interacts with HCK. Interacts with INPP5D/SHIP1. Interacts with SRC and YES. Interacts with ARMH4; this interaction prevents IL6ST protein homodimerization and bridges ARMH4 with IL6R and STAT3 and therefore inhibits phosphorylation of STAT3 at 'Tyr-705'. Phosphorylation of Ser-780 down-regulates cell surface expression. In terms of processing, heavily N-glycosylated. Glycosylation is required for protein stability and localization in plasma membrane but not for ligand binding. Expression not restricted to IL6-responsive cells. Found in tissues such as brain, heart, thymus, spleen, kidney, lung and liver. Found in all the cell lines tested except BaF-B03. Expressed paraventricular nucleus of the hypothalamus.

The protein resides in the cell membrane. Functionally, signal-transducing molecule. The receptor systems for IL6, LIF, OSM, CNTF, IL11, CTF1 and BSF3 can utilize IL6ST for initiating signal transmission. Binding of IL6 to IL6R induces IL6ST homodimerization and formation of a high-affinity receptor complex, which activates the intracellular JAK-MAPK and JAK-STAT3 signaling pathways. That causes phosphorylation of IL6ST tyrosine residues which in turn activates STAT3. In parallel, the IL6 signaling pathway induces the expression of two cytokine receptor signaling inhibitors, SOCS1 and SOCS3, which inhibit JAK and terminate the activity of the IL6 signaling pathway as a negative feedback loop. Also activates the yes-associated protein 1 (YAP) and NOTCH pathways to control inflammation-induced epithelial regeneration, independently of STAT3. Mediates signals which regulate immune response, hematopoiesis, pain control and bone metabolism. Has a role in embryonic development. Essential for survival of motor and sensory neurons and for differentiation of astrocytes. Required for expression of TRPA1 in nociceptive neurons. Required for the maintenance of PTH1R expression in the osteoblast lineage and for the stimulation of PTH-induced osteoblast differentiation. Required for normal trabecular bone mass and cortical bone composition. In Mus musculus (Mouse), this protein is Interleukin-6 receptor subunit beta.